A 43-amino-acid chain; its full sequence is Protein PsbN (43 aa).

The chain crosses the membrane as a helical span at residues 4–24; sequence AIVLIISVGAALVAVTGYGIY.

It belongs to the PsbN family.

The protein localises to the cellular thylakoid membrane. May play a role in photosystem I and II biogenesis. The chain is Protein PsbN from Trichormus variabilis (strain ATCC 29413 / PCC 7937) (Anabaena variabilis).